A 532-amino-acid polypeptide reads, in one-letter code: Probable pectinesterase/pectinesterase inhibitor 39 (532 aa).

Positions Met1 to Ser34 are cleaved as a signal peptide. The interval Gln35 to Ile169 is pectinesterase inhibitor 39. N-linked (GlcNAc...) asparagine glycosylation is found at Asn62, Asn74, Asn85, Asn172, Asn221, Asn231, Asn244, and Asn287. The tract at residues Asn221 to Ser518 is pectinesterase 39. Substrate is bound by residues Thr296 and Gln326. Asp349 (proton donor; for pectinesterase activity) is an active-site residue. Asp370 serves as the catalytic Nucleophile; for pectinesterase activity. Asn382 and Asn404 each carry an N-linked (GlcNAc...) asparagine glycan. Arg438 and Trp440 together coordinate substrate. N-linked (GlcNAc...) asparagine glycosylation is found at Asn502 and Asn522.

In the N-terminal section; belongs to the PMEI family. It in the C-terminal section; belongs to the pectinesterase family. Expressed in siliques but not in flower buds.

The protein localises to the secreted. The protein resides in the cell wall. The catalysed reaction is [(1-&gt;4)-alpha-D-galacturonosyl methyl ester](n) + n H2O = [(1-&gt;4)-alpha-D-galacturonosyl](n) + n methanol + n H(+). The protein operates within glycan metabolism; pectin degradation; 2-dehydro-3-deoxy-D-gluconate from pectin: step 1/5. In terms of biological role, acts in the modification of cell walls via demethylesterification of cell wall pectin. The sequence is that of Probable pectinesterase/pectinesterase inhibitor 39 (PME39) from Arabidopsis thaliana (Mouse-ear cress).